A 215-amino-acid chain; its full sequence is Pyridoxine/pyridoxamine 5'-phosphate oxidase (215 aa).

Substrate-binding positions include 9–12 (RRDY) and Lys-69. FMN-binding positions include 64–69 (RVLLLK), 79–80 (FT), Lys-86, and Gln-108. Substrate contacts are provided by Tyr-126, Arg-130, and Ser-134. FMN-binding positions include 143-144 (QS) and Trp-188. 194–196 (RLH) serves as a coordination point for substrate. Position 198 (Arg-198) interacts with FMN.

The protein belongs to the pyridoxamine 5'-phosphate oxidase family. Homodimer. The cofactor is FMN.

The catalysed reaction is pyridoxamine 5'-phosphate + O2 + H2O = pyridoxal 5'-phosphate + H2O2 + NH4(+). It carries out the reaction pyridoxine 5'-phosphate + O2 = pyridoxal 5'-phosphate + H2O2. The protein operates within cofactor metabolism; pyridoxal 5'-phosphate salvage; pyridoxal 5'-phosphate from pyridoxamine 5'-phosphate: step 1/1. It functions in the pathway cofactor metabolism; pyridoxal 5'-phosphate salvage; pyridoxal 5'-phosphate from pyridoxine 5'-phosphate: step 1/1. In terms of biological role, catalyzes the oxidation of either pyridoxine 5'-phosphate (PNP) or pyridoxamine 5'-phosphate (PMP) into pyridoxal 5'-phosphate (PLP). This is Pyridoxine/pyridoxamine 5'-phosphate oxidase from Pseudomonas syringae pv. tomato (strain ATCC BAA-871 / DC3000).